The chain runs to 872 residues: MIKKFDKKDEESGIGSNPFQHLEKSAVLQEARLFNETPINPRRCLHILTKILYLLNQGEHFGTMEATEAFFAMTRLFQSNDQTLRRMCYLTIKEMANISEDVIIVTSSLTKDMTGKEDVYRGPAIRALCRITDATMLQGIERYMKQAIVDKVSSVSSSALVSSLHMTKISYDVVKRWINEAQEAASSDNIMVQYHALGLLYNLRKNDRLAVSKMLNKFTKSGLKSPFAYCMLIRIASRLLEESEEGHNSPLFDFIESCLRNKHEMVIYEAASAIIHLPNCTARELAPAVSVLQLFCSSPKPALRYAAVRTLNKVAMKHPSAVTACNLDLENLITDSNRSIATLAITTLLKTGSESSVDRLMKQISTFVSEISDEFKVVVVQAISALCQKYPRKHSVMMTFLSNMLRDDGGFEYKRAIVDCIISIIEENPDSKESGLAHLCEFIEDCEHTVLATKILHLLGREGPKTPTPSKYIRFIFNRVVLENEAVRAAAVSALAKFGAQNEPLLPSVLVLLQRCMMDSDDEVRDRATFYFNVLNQNQLALNTAYIFNGLTVSVFGMEKALHQYTLEPSEKPFDMKTVPLATVPFLEQKTDLAPIATKQPEKMVPVRQDIFQDQLAAIPEFKNLGPLFKSSEPVQLTEAETEYFVRCIKHVFPNHIVFQFDCTNTLNDQLLEKVTVQMEPSEAYEVVHYVPAPSLPYNQPGISYTLVRLPDDDPTAVSCTFSCTMKFVVRDCDPQTGVPDDEGYSDEYVLEDLEVTLSDHIQKILKPNFGAAWEEIGDTYEKEETFALTTTKSLEEAVNNIIKFLGMQPCERSDKVPENKNSHVLYLSGVYRGGHDVLVRSRLALADGVTMQVTVRSQDETPANVILVSVG.

HEAT repeat units follow at residues 64 to 101 (MEAT…ISED), 283 to 320 (RELA…KHPS), 321 to 355 (AVTA…GSES), 356 to 392 (SVDR…KYPR), 395 to 430 (SVMM…ENPD), and 467 to 504 (PTPS…QNEP).

This sequence belongs to the COPG family. In terms of assembly, oligomeric complex.

It localises to the cytoplasm. Its subcellular location is the golgi apparatus membrane. It is found in the cytoplasmic vesicle. The protein localises to the COPI-coated vesicle membrane. In terms of biological role, the coatomer is a cytosolic protein complex that binds to dilysine motifs and reversibly associates with Golgi non-clathrin-coated vesicles, which further mediate biosynthetic protein transport from the ER, via the Golgi up to the trans Golgi network. Coatomer complex is required for budding from Golgi membranes, and is essential for the retrograde Golgi-to-ER transport of dilysine-tagged proteins. The polypeptide is Coatomer subunit gamma-2 (copg2) (Xenopus tropicalis (Western clawed frog)).